Reading from the N-terminus, the 129-residue chain is Glycine cleavage system H protein (129 aa).

The Lipoyl-binding domain maps to 24–106 (IATIGITEFA…YGEGWFLKVR (83 aa)). The residue at position 65 (lysine 65) is an N6-lipoyllysine.

Belongs to the GcvH family. The glycine cleavage system is composed of four proteins: P, T, L and H. (R)-lipoate serves as cofactor.

In terms of biological role, the glycine cleavage system catalyzes the degradation of glycine. The H protein shuttles the methylamine group of glycine from the P protein to the T protein. The sequence is that of Glycine cleavage system H protein from Nostoc punctiforme (strain ATCC 29133 / PCC 73102).